The primary structure comprises 99 residues: Malonate decarboxylase acyl carrier protein (99 aa).

At Ser25 the chain carries O-(phosphoribosyl dephospho-coenzyme A)serine.

Belongs to the MdcC family. In terms of processing, covalently binds the prosthetic group of malonate decarboxylase.

The protein localises to the cytoplasm. Functionally, subunit of malonate decarboxylase, it is an acyl carrier protein to which acetyl and malonyl thioester residues are bound via a 2'-(5''-phosphoribosyl)-3'-dephospho-CoA prosthetic group and turn over during the catalytic mechanism. The sequence is that of Malonate decarboxylase acyl carrier protein from Pseudomonas syringae pv. syringae (strain B728a).